The chain runs to 561 residues: Putative transport protein YbjL (561 aa).

The next 5 helical transmembrane spans lie at 8–28 (LLNGNYILLLFVVLALGLCLG), 32–52 (LGSIQLGNSIGVLVVSLLLGQ), 66–86 (FMLFIFCVGVEAGPNFFSIFF), 94–114 (MLALVMVGSALVIALGLGKLF), and 158–178 (NLSLGYALTYLIGLVSLIVGA). RCK C-terminal domains follow at residues 200–288 (RGLD…SFRN) and 292–373 (VFDR…RIGF). 5 helical membrane passes run 383-403 (LLAFCAFFVIGLMIGMITFQF), 406-426 (FSFGMGNAAGLLFAGIMLGFM), 451-471 (VFMAGVGLSAGSGINNGLGAI), 475-495 (MLIAGLIVSLVPVVICFLFGA), and 540-560 (AIANVLLTLAGTIIVMVWPGL).

This sequence belongs to the AAE transporter (TC 2.A.81) family. YbjL subfamily.

The protein localises to the cell membrane. The sequence is that of Putative transport protein YbjL from Shigella boydii serotype 4 (strain Sb227).